The chain runs to 555 residues: NAD-dependent protein deacetylase sirtuin-1 (555 aa).

A Nuclear localization signal motif is present at residues proline 39–lysine 46. Positions lysine 44–glutamate 304 constitute a Deacetylase sirtuin-type domain. At lysine 46 the chain carries N6-acetyllysine. Positions isoleucine 64–leucine 67 are required for interaction with the sumoylated form of CCAR2. NAD(+) contacts are provided by residues glycine 69–tyrosine 88 and glutamine 153–aspartate 156. Histidine 171 functions as the Proton acceptor in the catalytic mechanism. Zn(2+) is bound by residues cysteine 179 and cysteine 182. Position 185 is an N6-acetyllysine (lysine 185). Zn(2+) contacts are provided by cysteine 203 and cysteine 206. S-nitrosocysteine occurs at positions 203 and 206. Lysine 238 is modified (N6-acetyllysine). Positions valine 241 to isoleucine 247 match the Nuclear export signal motif. Residues glycine 248 to serine 250, asparagine 273 to glutamate 275, and cysteine 290 contribute to the NAD(+) site. Residue lysine 321 is modified to N6-acetyllysine. The segment at leucine 335–proline 354 is disordered. A Phosphothreonine modification is found at threonine 338. Serine 343 bears the Phosphoserine mark. Residues aspartate 345 to proline 354 are compositionally biased toward polar residues. At threonine 352 the chain carries Phosphothreonine. At lysine 417 the chain carries N6-acetyllysine. Residues serine 466 and serine 468 each carry the phosphoserine modification. The disordered stretch occupies residues glutamate 469–glutamine 529. Residues leucine 473–glutamate 493 are compositionally biased toward low complexity. A compositionally biased stretch (acidic residues) spans glutamate 494 to aspartate 514. Phosphoserine is present on serine 552.

Belongs to the sirtuin family. Class I subfamily. Interacts with XBP1 isoform 2. Found in a complex with PCAF and MYOD1. Interacts with FOXO1; the interaction deacetylates FOXO1, resulting in its nuclear retention and promotion of its transcriptional activity Component of the eNoSC complex, composed of SIRT1, SUV39H1 and RRP8. Interacts with HES1, HEY2 and PML. Interacts with RPS19BP1/AROS. Interacts with CCAR2 (via N-terminus); the interaction disrupts the interaction between SIRT1 and p53/TP53. Interacts with SETD7; the interaction induces the dissociation of SIRT1 from p53/TP53 and increases p53/TP53 activity. Interacts with MYCN, NR1I2, CREBZF, TSC2, TLE1, FOS, JUN, NR0B2, PPARG, NCOR, IRS1, IRS2 and NMNAT1. Interacts with HNF1A; the interaction occurs under nutrient restriction. Interacts with SUZ12; the interaction mediates the association with the PRC4 histone methylation complex which is specific as an association with PCR2 and PCR3 complex variants is not found. Interacts with HIV-1 tat. Interacts with BCL6; leads to a epigenetic repression of specific target genes. Interacts with CLOCK, BMAL1 and PER2. Interacts with PPARA; the interaction seems to be modulated by NAD(+) levels. Interacts with NR1H3 and this interaction is inhibited in the presence of CCAR2. Interacts with CHEK2. Interacts with p53/TP53. Exhibits a preferential interaction with sumoylated CCAR2 over its unmodified form. Interacts with PACS2. Interacts with SIRT7. Interacts with PUS7. Interacts with TULP3. Interacts with MORN3; the interaction enhances the ubiquitination of p53/TP53. Zn(2+) is required as a cofactor. Methylated on multiple lysine residues; methylation is enhanced after DNA damage and is dispensable for deacetylase activity toward p53/TP53. Post-translationally, phosphorylated. Phosphorylated by STK4/MST1, resulting in inhibition of SIRT1-mediated p53/TP53 deacetylation. Phosphorylation by MAPK8/JNK1 at Thr-338 leads to increased nuclear localization and enzymatic activity. Phosphorylation at Thr-338 by DYRK1A and DYRK3 activates deacetylase activity and promotes cell survival. Phosphorylated by CaMK2, leading to increased p53/TP53 and NF-kappa-B p65/RELA deacetylation activity. In terms of processing, S-nitrosylated by GAPDH, leading to inhibit the NAD-dependent protein deacetylase activity. Acetylated at various Lys residues. Deacetylated via an autocatalytic mechanism. Autodeacetylation at Lys-46 promotes its protein deacetylase activity. Post-translationally, ubiquitinated; leading to degradation. Deubiquitinated by USP22; leading to stabilization.

The protein localises to the nucleus. The protein resides in the PML body. Its subcellular location is the cytoplasm. It carries out the reaction N(6)-acetyl-L-lysyl-[protein] + NAD(+) + H2O = 2''-O-acetyl-ADP-D-ribose + nicotinamide + L-lysyl-[protein]. The enzyme catalyses N(6)-propanoyl-L-lysyl-[protein] + NAD(+) + H2O = 3''-O-propanoyl-ADP-D-ribose + nicotinamide + L-lysyl-[protein]. The catalysed reaction is N(6)-(2E)-butenoyl-L-lysyl-[protein] + NAD(+) + H2O = 2''-O-(2E)-but-2-enoyl-ADP-D-ribose + nicotinamide + L-lysyl-[protein]. Inhibited by nicotinamide. Activated by resveratrol (3,5,4'-trihydroxy-trans-stilbene), butein (3,4,2',4'-tetrahydroxychalcone), piceatannol (3,5,3',4'-tetrahydroxy-trans-stilbene), Isoliquiritigenin (4,2',4'-trihydroxychalcone), fisetin (3,7,3',4'-tetrahydroxyflavone) and quercetin (3,5,7,3',4'-pentahydroxyflavone). MAPK8/JNK1 and RPS19BP1/AROS act as positive regulators of deacetylation activity. Negatively regulated by CCAR2. Its function is as follows. NAD-dependent protein deacetylase that links transcriptional regulation directly to intracellular energetics and participates in the coordination of several separated cellular functions such as cell cycle, response to DNA damage, metabolism, apoptosis and autophagy. Can modulate chromatin function through deacetylation of histones and can promote alterations in the methylation of histones and DNA, leading to transcriptional repression. Deacetylates a broad range of transcription factors and coregulators, thereby regulating target gene expression positively and negatively. Serves as a sensor of the cytosolic ratio of NAD(+)/NADH which is altered by glucose deprivation and metabolic changes associated with caloric restriction. Is essential in skeletal muscle cell differentiation and in response to low nutrients mediates the inhibitory effect on skeletal myoblast differentiation which also involves 5'-AMP-activated protein kinase (AMPK) and nicotinamide phosphoribosyltransferase (NAMPT). Component of the eNoSC (energy-dependent nucleolar silencing) complex, a complex that mediates silencing of rDNA in response to intracellular energy status and acts by recruiting histone-modifying enzymes. The eNoSC complex is able to sense the energy status of cell: upon glucose starvation, elevation of NAD(+)/NADP(+) ratio activates SIRT1, leading to histone H3 deacetylation followed by dimethylation of H3 at 'Lys-9' (H3K9me2) by SUV39H1 and the formation of silent chromatin in the rDNA locus. Deacetylates 'Lys-266' of SUV39H1, leading to its activation. Inhibits skeletal muscle differentiation by deacetylating PCAF and MYOD1. Deacetylates H2A and 'Lys-26' of H1-4. Deacetylates 'Lys-16' of histone H4 (in vitro). Involved in NR0B2/SHP corepression function through chromatin remodeling: Recruited to LRH1 target gene promoters by NR0B2/SHP thereby stimulating histone H3 and H4 deacetylation leading to transcriptional repression. Proposed to contribute to genomic integrity via positive regulation of telomere length; however, reports on localization to pericentromeric heterochromatin are conflicting. Proposed to play a role in constitutive heterochromatin (CH) formation and/or maintenance through regulation of the available pool of nuclear SUV39H1. Upon oxidative/metabolic stress decreases SUV39H1 degradation by inhibiting SUV39H1 polyubiquitination by MDM2. This increase in SUV39H1 levels enhances SUV39H1 turnover in CH, which in turn seems to accelerate renewal of the heterochromatin which correlates with greater genomic integrity during stress response. Deacetylates 'Lys-382' of p53/TP53 and impairs its ability to induce transcription-dependent proapoptotic program and modulate cell senescence. Deacetylates TAF1B and thereby represses rDNA transcription by the RNA polymerase I. Deacetylates MYC, promotes the association of MYC with MAX and decreases MYC stability leading to compromised transformational capability. Deacetylates FOXO3 in response to oxidative stress thereby increasing its ability to induce cell cycle arrest and resistance to oxidative stress but inhibiting FOXO3-mediated induction of apoptosis transcriptional activity; also leading to FOXO3 ubiquitination and protesomal degradation. Appears to have a similar effect on MLLT7/FOXO4 in regulation of transcriptional activity and apoptosis. Deacetylates DNMT1; thereby impairs DNMT1 methyltransferase-independent transcription repressor activity, modulates DNMT1 cell cycle regulatory function and DNMT1-mediated gene silencing. Deacetylates RELA/NF-kappa-B p65 thereby inhibiting its transactivating potential and augments apoptosis in response to TNF-alpha. Deacetylates HIF1A, KAT5/TIP60, RB1 and HIC1. Deacetylates FOXO1 resulting in its nuclear retention and enhancement of its transcriptional activity leading to increased gluconeogenesis in liver. Inhibits E2F1 transcriptional activity and apoptotic function, possibly by deacetylation. Involved in HES1- and HEY2-mediated transcriptional repression. In cooperation with MYCN seems to be involved in transcriptional repression of DUSP6/MAPK3 leading to MYCN stabilization by phosphorylation at 'Ser-62'. Deacetylates MEF2D. Required for antagonist-mediated transcription suppression of AR-dependent genes which may be linked to local deacetylation of histone H3. Represses HNF1A-mediated transcription. Required for the repression of ESRRG by CREBZF. Deacetylates NR1H3 AND NR1H2 and deacetylation of NR1H3 at 'Lys-434' positively regulates transcription of NR1H3:RXR target genes, promotes NR1H3 proteasomal degradation and results in cholesterol efflux; a promoter clearing mechanism after reach round of transcription is proposed. Involved in lipid metabolism: deacetylates LPIN1, thereby inhibiting diacylglycerol synthesis. Implicated in regulation of adipogenesis and fat mobilization in white adipocytes by repression of PPARG which probably involves association with NCOR1 and SMRT/NCOR2. Deacetylates p300/EP300 and PRMT1. Deacetylates ACSS2 leading to its activation, and HMGCS1 deacetylation. Involved in liver and muscle metabolism. Through deacetylation and activation of PPARGC1A is required to activate fatty acid oxidation in skeletal muscle under low-glucose conditions and is involved in glucose homeostasis. Involved in regulation of PPARA and fatty acid beta-oxidation in liver. Involved in positive regulation of insulin secretion in pancreatic beta cells in response to glucose; the function seems to imply transcriptional repression of UCP2. Proposed to deacetylate IRS2 thereby facilitating its insulin-induced tyrosine phosphorylation. Deacetylates SREBF1 isoform SREBP-1C thereby decreasing its stability and transactivation in lipogenic gene expression. Involved in DNA damage response by repressing genes which are involved in DNA repair, such as XPC and TP73, deacetylating XRCC6/Ku70, and facilitating recruitment of additional factors to sites of damaged DNA, such as SIRT1-deacetylated NBN can recruit ATM to initiate DNA repair and SIRT1-deacetylated XPA interacts with RPA2. Also involved in DNA repair of DNA double-strand breaks by homologous recombination and specifically single-strand annealing independently of XRCC6/Ku70 and NBN. Promotes DNA double-strand breaks by mediating deacetylation of SIRT6. Transcriptional suppression of XPC probably involves an E2F4:RBL2 suppressor complex and protein kinase B (AKT) signaling. Transcriptional suppression of TP73 probably involves E2F4 and PCAF. Deacetylates WRN thereby regulating its helicase and exonuclease activities and regulates WRN nuclear translocation in response to DNA damage. Deacetylates APEX1 at 'Lys-6' and 'Lys-7' and stimulates cellular AP endonuclease activity by promoting the association of APEX1 to XRCC1. Catalyzes deacetylation of ERCC4/XPF, thereby impairing interaction with ERCC1 and nucleotide excision repair (NER). Increases p53/TP53-mediated transcription-independent apoptosis by blocking nuclear translocation of cytoplasmic p53/TP53 and probably redirecting it to mitochondria. Deacetylates XRCC6/Ku70 at 'Lys-539' and 'Lys-542' causing it to sequester BAX away from mitochondria thereby inhibiting stress-induced apoptosis. Is involved in autophagy, presumably by deacetylating ATG5, ATG7 and MAP1LC3B/ATG8. Deacetylates AKT1 which leads to enhanced binding of AKT1 and PDK1 to PIP3 and promotes their activation. Proposed to play role in regulation of STK11/LBK1-dependent AMPK signaling pathways implicated in cellular senescence which seems to involve the regulation of the acetylation status of STK11/LBK1. Can deacetylate STK11/LBK1 and thereby increase its activity, cytoplasmic localization and association with STRAD; however, the relevance of such activity in normal cells is unclear. In endothelial cells is shown to inhibit STK11/LBK1 activity and to promote its degradation. Deacetylates SMAD7 at 'Lys-64' and 'Lys-70' thereby promoting its degradation. Deacetylates CIITA and augments its MHC class II transactivation and contributes to its stability. Deacetylates MECOM/EVI1. Deacetylates PML at 'Lys-487' and this deacetylation promotes PML control of PER2 nuclear localization. During the neurogenic transition, represses selective NOTCH1-target genes through histone deacetylation in a BCL6-dependent manner and leading to neuronal differentiation. Regulates the circadian expression of several core clock genes, including BMAL1, RORC, PER2 and CRY1 and plays a critical role in maintaining a controlled rhythmicity in histone acetylation, thereby contributing to circadian chromatin remodeling. Deacetylates BMAL1 and histones at the circadian gene promoters in order to facilitate repression by inhibitory components of the circadian oscillator. Deacetylates PER2, facilitating its ubiquitination and degradation by the proteasome. Protects cardiomyocytes against palmitate-induced apoptosis. Deacetylates XBP1 isoform 2; deacetylation decreases protein stability of XBP1 isoform 2 and inhibits its transcriptional activity. Deacetylates PCK1 and directs its activity toward phosphoenolpyruvate production promoting gluconeogenesis. Involved in the CCAR2-mediated regulation of PCK1 and NR1D1. Deacetylates CTNB1 at 'Lys-49'. In POMC (pro-opiomelanocortin) neurons, required for leptin-induced activation of PI3K signaling. In addition to protein deacetylase activity, also acts as a protein-lysine deacylase by mediating protein depropionylation and decrotonylation. Mediates depropionylation of Osterix (SP7). Catalyzes decrotonylation of histones; it however does not represent a major histone decrotonylase. Deacetylates SOX9; promoting SOX9 nuclear localization and transactivation activity. Involved in the regulation of centrosome duplication. Deacetylates CENATAC in G1 phase, allowing for SASS6 accumulation on the centrosome and subsequent procentriole assembly. Deacetylates NDC80/HEC1. The chain is NAD-dependent protein deacetylase sirtuin-1 from Rattus norvegicus (Rat).